The chain runs to 478 residues: Glutamate--tRNA ligase (478 aa).

The short motif at 23–33 is the 'HIGH' region element; that stretch reads PSPTGFIHLGN. Over residues 130–145 the composition is skewed to basic and acidic residues; sequence KQKPRYDGTWRPEEGK. The disordered stretch occupies residues 130–153; sequence KQKPRYDGTWRPEEGKTLPPVPEG. A 'KMSKS' region motif is present at residues 255-259; sequence KMSKR. An ATP-binding site is contributed by Lys258.

Belongs to the class-I aminoacyl-tRNA synthetase family. Glutamate--tRNA ligase type 1 subfamily. As to quaternary structure, monomer.

It is found in the cytoplasm. The catalysed reaction is tRNA(Glu) + L-glutamate + ATP = L-glutamyl-tRNA(Glu) + AMP + diphosphate. Catalyzes the attachment of glutamate to tRNA(Glu) in a two-step reaction: glutamate is first activated by ATP to form Glu-AMP and then transferred to the acceptor end of tRNA(Glu). The sequence is that of Glutamate--tRNA ligase from Paracidovorax citrulli (strain AAC00-1) (Acidovorax citrulli).